Here is a 381-residue protein sequence, read N- to C-terminus: Protein TRIGALACTOSYLDIACYLGLYCEROL 2, chloroplastic (381 aa).

A chloroplast-targeting transit peptide spans 1-45 (MIGNPVIQVPSSLMPSSSMIACPRVSPNGVPYLPPKPRTRHLVVR). Over 46 to 96 (AASNSDAAHGQPSSDGGKNPLTVVLDVPRNIWRQTLKPLSDFGFGKRSIWE) the chain is Stromal. The helical transmembrane segment at 97-117 (GGVGLFIVSGATLLALSWAWL) threads the bilayer. Topologically, residues 118 to 381 (RGFQMRSKFR…LLIKSLSRLL (264 aa)) are chloroplast intermembrane.

Homomultimer. Substrate-binding subunit of the TGD complex, a lipid translocator at the inner chloroplast envelope membrane made of TGD1, TGD2 and TGD3. Interacts with TGD1 and TGD3 with an overall subunit stoichiometry of 2 TGD1, 2 TGD3 and 8 to 12 TGD2. Interacts with TGD5.

Its subcellular location is the plastid. The protein localises to the chloroplast inner membrane. Functionally, component of a phosphatidic acid/lipid transport complex in the chloroplast envelope. Specifically binds phosphatidic acid (PA). Involved in lipid transfer from the endoplasmic reticulum (ER) to plastids, and necessary for thylakoids formation. The sequence is that of Protein TRIGALACTOSYLDIACYLGLYCEROL 2, chloroplastic from Arabidopsis thaliana (Mouse-ear cress).